Here is a 67-residue protein sequence, read N- to C-terminus: Conotoxin Pu5.1 (67 aa).

The signal sequence occupies residues 1–22 (MRCVPVFVILLLLIASTPSVDA). Positions 23 to 51 (RPNPKDDVPLASFHEDANGILQMLWKKGR) are excised as a propeptide. At W63 the chain carries Tryptophan amide.

Belongs to the conotoxin T superfamily. Contains 2 disulfide bonds that can be either 'C1-C3, C2-C4' or 'C1-C4, C2-C3', since these disulfide connectivities have been observed for conotoxins with cysteine framework V (for examples, see AC P0DQQ7 and AC P81755). Expressed by the venom duct.

The protein resides in the secreted. In Conus pulicarius (Flea-bitten cone), this protein is Conotoxin Pu5.1.